The primary structure comprises 146 residues: Ferredoxin-thioredoxin reductase catalytic chain, chloroplastic (146 aa).

Residues 1-31 constitute a chloroplast transit peptide; the sequence is MNLQAVSCSFGFLSSPLGVTPRTSFRRFVIR. Cysteine 85 is a binding site for [4Fe-4S] cluster. Residue cysteine 87 is the Nucleophile of the active site. A disulfide bond links cysteine 87 and cysteine 117. [4Fe-4S] cluster-binding residues include cysteine 104, cysteine 106, and cysteine 115.

It belongs to the ferredoxin thioredoxin reductase beta subunit family. In terms of assembly, heterodimer of subunit A (variable subunit) and subunit B (catalytic subunit). Heterodimeric FTR forms a complex with ferredoxin and thioredoxin. [4Fe-4S] cluster serves as cofactor.

Its subcellular location is the plastid. The protein resides in the chloroplast. The enzyme catalyses [thioredoxin]-disulfide + 2 reduced [2Fe-2S]-[ferredoxin] + 2 H(+) = [thioredoxin]-dithiol + 2 oxidized [2Fe-2S]-[ferredoxin]. Functionally, catalytic subunit of the ferredoxin-thioredoxin reductase (FTR), which catalyzes the two-electron reduction of thioredoxins by the electrons provided by reduced ferredoxin. The sequence is that of Ferredoxin-thioredoxin reductase catalytic chain, chloroplastic from Arabidopsis thaliana (Mouse-ear cress).